The sequence spans 479 residues: Glutamate--tRNA ligase 2 (479 aa).

A 'HIGH' region motif is present at residues 10–20 (PSPTGSLHIGG). Positions 243 to 247 (KLSKR) match the 'KMSKS' region motif. Residue Lys-246 coordinates ATP.

This sequence belongs to the class-I aminoacyl-tRNA synthetase family. Glutamate--tRNA ligase type 1 subfamily. In terms of assembly, monomer.

It localises to the cytoplasm. The catalysed reaction is tRNA(Glu) + L-glutamate + ATP = L-glutamyl-tRNA(Glu) + AMP + diphosphate. Catalyzes the attachment of glutamate to tRNA(Glu) in a two-step reaction: glutamate is first activated by ATP to form Glu-AMP and then transferred to the acceptor end of tRNA(Glu). This Thermoanaerobacter pseudethanolicus (strain ATCC 33223 / 39E) (Clostridium thermohydrosulfuricum) protein is Glutamate--tRNA ligase 2.